We begin with the raw amino-acid sequence, 71 residues long: Small ribosomal subunit protein bS18 (71 aa).

It belongs to the bacterial ribosomal protein bS18 family. As to quaternary structure, part of the 30S ribosomal subunit. Forms a tight heterodimer with protein bS6.

In terms of biological role, binds as a heterodimer with protein bS6 to the central domain of the 16S rRNA, where it helps stabilize the platform of the 30S subunit. This is Small ribosomal subunit protein bS18 from Synechococcus sp. (strain JA-2-3B'a(2-13)) (Cyanobacteria bacterium Yellowstone B-Prime).